The sequence spans 362 residues: uncharacterized protein (362 aa).

The protein belongs to the carbohydrate kinase PfkB family.

This is an uncharacterized protein from Escherichia coli (strain K12).